The sequence spans 174 residues: Dual-action ribosomal maturation protein DarP (174 aa).

It belongs to the DarP family.

The protein resides in the cytoplasm. In terms of biological role, member of a network of 50S ribosomal subunit biogenesis factors which assembles along the 30S-50S interface, preventing incorrect 23S rRNA structures from forming. Promotes peptidyl transferase center (PTC) maturation. The sequence is that of Dual-action ribosomal maturation protein DarP from Vibrio campbellii (strain ATCC BAA-1116).